Reading from the N-terminus, the 1050-residue chain is Beta-galactosidase (1050 aa).

Substrate contacts are provided by N110 and D209. A Na(+)-binding site is contributed by D209. Mg(2+) contacts are provided by E432, H434, and E477. Substrate is bound by residues E477 and 553–556 (EYAH). Catalysis depends on E477, which acts as the Proton donor. The active-site Nucleophile is E553. Position 613 (N613) interacts with Mg(2+). F617 and N620 together coordinate Na(+). The substrate site is built by N620 and W1023.

Belongs to the glycosyl hydrolase 2 family. As to quaternary structure, homotetramer. Mg(2+) is required as a cofactor. Na(+) serves as cofactor.

It carries out the reaction Hydrolysis of terminal non-reducing beta-D-galactose residues in beta-D-galactosides.. This chain is Beta-galactosidase, found in Yersinia enterocolitica serotype O:8 / biotype 1B (strain NCTC 13174 / 8081).